A 189-amino-acid chain; its full sequence is GTP cyclohydrolase 1 (189 aa).

Zn(2+) contacts are provided by cysteine 79, histidine 82, and cysteine 150.

Belongs to the GTP cyclohydrolase I family. In terms of assembly, homomer.

It carries out the reaction GTP + H2O = 7,8-dihydroneopterin 3'-triphosphate + formate + H(+). Its pathway is cofactor biosynthesis; 7,8-dihydroneopterin triphosphate biosynthesis; 7,8-dihydroneopterin triphosphate from GTP: step 1/1. The sequence is that of GTP cyclohydrolase 1 from Rickettsia africae (strain ESF-5).